We begin with the raw amino-acid sequence, 325 residues long: Elongation factor P--(R)-beta-lysine ligase (325 aa).

76-78 (SPE) serves as a coordination point for substrate. Residues 100 to 102 (RNE) and asparagine 109 each bind ATP. Residue tyrosine 118 coordinates substrate. Residue 244–245 (EL) coordinates ATP. Glutamate 251 is a substrate binding site. Glycine 300 contributes to the ATP binding site.

Belongs to the class-II aminoacyl-tRNA synthetase family. EpmA subfamily. Homodimer.

The catalysed reaction is D-beta-lysine + L-lysyl-[protein] + ATP = N(6)-((3R)-3,6-diaminohexanoyl)-L-lysyl-[protein] + AMP + diphosphate + H(+). With EpmB is involved in the beta-lysylation step of the post-translational modification of translation elongation factor P (EF-P). Catalyzes the ATP-dependent activation of (R)-beta-lysine produced by EpmB, forming a lysyl-adenylate, from which the beta-lysyl moiety is then transferred to the epsilon-amino group of a conserved specific lysine residue in EF-P. In Pectobacterium carotovorum subsp. carotovorum (strain PC1), this protein is Elongation factor P--(R)-beta-lysine ligase.